Here is a 363-residue protein sequence, read N- to C-terminus: RNA exonuclease NGL1 (363 aa).

The transit peptide at 1–23 directs the protein to the mitochondrion; that stretch reads MFTRRFIPVVQSTKQNIGKYVRK.

It belongs to the CCR4/nocturin family.

It localises to the mitochondrion. The sequence is that of RNA exonuclease NGL1 (NGL1) from Saccharomyces cerevisiae (strain ATCC 204508 / S288c) (Baker's yeast).